Reading from the N-terminus, the 170-residue chain is Sec-independent protein translocase protein TATA, chloroplastic (170 aa).

Residues 1–61 (MGIPVVVPVA…GGSGGDLAAV (61 aa)) constitute a chloroplast transit peptide. Topologically, residues 62–84 (AASVAARPRRAGSGGGGALGCKC) are lumenal. A helical transmembrane segment spans residues 85–105 (LFGLGVPELAVIAGVAALVFG). The Stromal portion of the chain corresponds to 106–170 (PKQLPEIGRS…LEASSSKESA (65 aa)). A compositionally biased stretch (basic and acidic residues) spans 130–139 (FETELKKEPG). The segment at 130-170 (FETELKKEPGEGGDQPPPATPTAVSGGEEKGLEASSSKESA) is disordered.

This sequence belongs to the TatA/E family. As to quaternary structure, in thylakoid membranes, TATC and TATB form a large receptor complex, containing about eight TATC-TATB pairs, which binds the precursor protein. Twin arginine signal peptide promotes pH-triggered docking of TATA oligomers to TATC-TATB receptor complex, inducing a conformational switch of TATA that results in activation of the translocase. TATA dissociates from TATC-TATB upon completion of translocation.

It localises to the plastid. The protein localises to the chloroplast thylakoid membrane. Its function is as follows. Part of the twin-arginine translocation (Tat) system that transports large folded proteins containing a characteristic twin-arginine motif in their signal peptide across the thylakoid membrane. Involved in delta pH-dependent protein transport required for chloroplast development, especially thylakoid membrane formation. TATC and TATB mediate precursor recognition, whereas TATA facilitates translocation. This is Sec-independent protein translocase protein TATA, chloroplastic from Zea mays (Maize).